A 414-amino-acid polypeptide reads, in one-letter code: Serine/threonine transporter SstT (414 aa).

Residues 2-15 (TTQRSPGLFRRLAH) lie on the Cytoplasmic side of the membrane. A helical membrane pass occupies residues 16–36 (GSLVKQILVGLVLGILLAWIS). Residues 37–45 (KPAAEAVGL) are Periplasmic-facing. Residues 46-66 (LGTLFVGALKAVAPILVLMLV) traverse the membrane as a helical segment. The Cytoplasmic segment spans residues 67-83 (MASIANHQHGQKTNIRP). A helical transmembrane segment spans residues 84–104 (ILFLYLLGTFSAALAAVVFSF). Residues 105 to 142 (AFPSTLHLSSSAGDISPPSGIVEVMRGLVMSMVSNPID) lie on the Periplasmic side of the membrane. Residues 143–163 (ALLKGNYIGILVWAIGLGFAL) form a helical membrane-spanning segment. Residues 164 to 179 (RHGNETTKNLVNDLSN) are Cytoplasmic-facing. A helical membrane pass occupies residues 180–200 (AVTFMVKLVIRFAPIGIFGLV). Over 201-217 (SSTLATTGFSTLWGYAQ) the chain is Periplasmic. The chain crosses the membrane as a helical span at residues 218–238 (LLVVLVGCMLLVALVVNPLLV). At 239–299 (WWKIRRNPFP…VSIPLGATIN (61 aa)) the chain is on the cytoplasmic side. A helical membrane pass occupies residues 300-320 (MAGAAITITVLTLAAVNTLGI). Residues 321–331 (PVDLPTALLLS) lie on the Periplasmic side of the membrane. A helical transmembrane segment spans residues 332–352 (VVASLCACGASGVAGGSLLLI). At 353–414 (PLACNMFGIS…DRLANSALRN (62 aa)) the chain is on the cytoplasmic side.

It belongs to the dicarboxylate/amino acid:cation symporter (DAACS) (TC 2.A.23) family.

Its subcellular location is the cell inner membrane. The catalysed reaction is L-serine(in) + Na(+)(in) = L-serine(out) + Na(+)(out). The enzyme catalyses L-threonine(in) + Na(+)(in) = L-threonine(out) + Na(+)(out). Its function is as follows. Involved in the import of serine and threonine into the cell, with the concomitant import of sodium (symport system). The sequence is that of Serine/threonine transporter SstT from Shigella boydii serotype 4 (strain Sb227).